The sequence spans 56 residues: MGHQQLYWSHPRKFGQGSRSCRVCSNRHGLIRKYGLNMCRQCFRQYAKDIGFVKLD.

4 residues coordinate Zn(2+): cysteine 21, cysteine 24, cysteine 39, and cysteine 42.

Belongs to the universal ribosomal protein uS14 family. In terms of assembly, component of the 40S small ribosomal subunit. Zn(2+) is required as a cofactor.

Its subcellular location is the cytoplasm. The protein localises to the cytosol. It localises to the rough endoplasmic reticulum. Component of the small ribosomal subunit. The ribosome is a large ribonucleoprotein complex responsible for the synthesis of proteins in the cell. The polypeptide is Small ribosomal subunit protein uS14 (rps29) (Hippocampus comes (Tiger tail seahorse)).